A 333-amino-acid chain; its full sequence is MPLGLGRRKKAPPLVENEEAEPSRSGLGVGEPGPLGGSAAGESQMGLPPPPAALRPRLVFHTQLAHGSPTGRIEGFTNVKELYGKIAEAFRLPAAEVMFCTLNTHKVDMDKLLGGQIGLEDFIFAHVKGQRKEVEVFKSEEALGLTITDNGAGYAFIKRIKEGSVIDHIQLISVGDMIEAINGQSLLGCRHYEVARLLKELPRGRTFTLKLTEPRKAFDMISQRSAGGHPGSGPQLGTGRGTLRLRSRGPATVEDLPSAFEEKAIEKVDDLLESYMGIRDTELAATMVELGKDKRNPDELAEALDERLGDFAFPDEFVFDVWGAIGDAKVGRY.

The segment covering 1–11 has biased composition (basic residues); that stretch reads MPLGLGRRKKA. The tract at residues 1-53 is disordered; it reads MPLGLGRRKKAPPLVENEEAEPSRSGLGVGEPGPLGGSAAGESQMGLPPPPAA. Residues 27–39 show a composition bias toward gly residues; sequence LGVGEPGPLGGSA. Phosphoserine is present on Ser68. Residues 133 to 213 form the PDZ domain; it reads EVEVFKSEEA…GRTFTLKLTE (81 aa). Phosphoserine occurs at positions 222, 225, and 232. The interval 223–244 is disordered; it reads QRSAGGHPGSGPQLGTGRGTLR. The span at 228–240 shows a compositional bias: gly residues; it reads GHPGSGPQLGTGR. Thr242 carries the post-translational modification Phosphothreonine. Ser247 is subject to Phosphoserine.

Belongs to the GIPC family. In terms of assembly, interacts with GLUT1 (C-terminus), ACTN1, KIF1B, MYO6 and PLEKHG5. Interacts with RGS19 C-terminus. Interacts with SDC4/syndecan-4 and SEMA4C/semaphorin-4C. In terms of tissue distribution, widely expressed.

The protein localises to the cytoplasm. It is found in the membrane. Its function is as follows. Inhibits endothelial cell migration (in vitro). May be involved in G protein-linked signaling. This chain is PDZ domain-containing protein GIPC1 (Gipc1), found in Mus musculus (Mouse).